The primary structure comprises 994 residues: Probable beta-galactosidase C (994 aa).

An N-terminal signal peptide occupies residues 1 to 19 (MKLQSILSCWAILVAQIWA). Residue Y78 coordinates substrate. A glycan (N-linked (GlcNAc...) asparagine) is linked at N88. Substrate is bound by residues N123, A124, E125, and N183. The active-site Proton donor is E184. Residue Y247 coordinates substrate. An intrachain disulfide couples C253 to C301. A glycan (N-linked (GlcNAc...) asparagine) is linked at N272. E283 serves as the catalytic Nucleophile. Substrate is bound at residue Y350. N388, N407, N433, N500, N514, N521, N584, N600, N674, N712, N717, N757, N861, and N969 each carry an N-linked (GlcNAc...) asparagine glycan.

It belongs to the glycosyl hydrolase 35 family.

It localises to the secreted. It catalyses the reaction Hydrolysis of terminal non-reducing beta-D-galactose residues in beta-D-galactosides.. Cleaves beta-linked terminal galactosyl residues from gangliosides, glycoproteins, and glycosaminoglycans. This chain is Probable beta-galactosidase C (lacC), found in Aspergillus niger (strain ATCC MYA-4892 / CBS 513.88 / FGSC A1513).